Consider the following 158-residue polypeptide: Ecotin-like protein 2 (158 aa).

The protein belongs to the protease inhibitor I11 (ecotin) family.

This is Ecotin-like protein 2 from Leishmania major.